Consider the following 767-residue polypeptide: Probable beta-D-xylosidase 7 (767 aa).

The first 19 residues, 1-19 (MAKQLLLLLLLFIVHGVES), serve as a signal peptide directing secretion. N-linked (GlcNAc...) asparagine glycosylation occurs at N100. Residue D292 is part of the active site. N643 is a glycosylation site (N-linked (GlcNAc...) asparagine).

It belongs to the glycosyl hydrolase 3 family.

It is found in the secreted. It localises to the extracellular space. The protein resides in the extracellular matrix. The protein is Probable beta-D-xylosidase 7 (BXL7) of Arabidopsis thaliana (Mouse-ear cress).